Here is a 716-residue protein sequence, read N- to C-terminus: Fatty acid oxidation complex subunit alpha (716 aa).

The tract at residues Met-1–Ala-189 is enoyl-CoA hydratase/isomerase. Asp-296 serves as a coordination point for substrate. Residues Lys-311 to Ser-716 are 3-hydroxyacyl-CoA dehydrogenase. Residues Met-324, Asp-343, Val-400 to Glu-402, Lys-407, and Ser-429 contribute to the NAD(+) site. Catalysis depends on His-450, which acts as the For 3-hydroxyacyl-CoA dehydrogenase activity. NAD(+) is bound at residue Asn-453. Residue Asn-500 participates in substrate binding.

The protein in the N-terminal section; belongs to the enoyl-CoA hydratase/isomerase family. This sequence in the C-terminal section; belongs to the 3-hydroxyacyl-CoA dehydrogenase family. Heterotetramer of two alpha chains (FadB) and two beta chains (FadA).

The catalysed reaction is a (3S)-3-hydroxyacyl-CoA + NAD(+) = a 3-oxoacyl-CoA + NADH + H(+). It carries out the reaction a (3S)-3-hydroxyacyl-CoA = a (2E)-enoyl-CoA + H2O. It catalyses the reaction a 4-saturated-(3S)-3-hydroxyacyl-CoA = a (3E)-enoyl-CoA + H2O. The enzyme catalyses (3S)-3-hydroxybutanoyl-CoA = (3R)-3-hydroxybutanoyl-CoA. The catalysed reaction is a (3Z)-enoyl-CoA = a 4-saturated (2E)-enoyl-CoA. It carries out the reaction a (3E)-enoyl-CoA = a 4-saturated (2E)-enoyl-CoA. Its pathway is lipid metabolism; fatty acid beta-oxidation. In terms of biological role, involved in the aerobic and anaerobic degradation of long-chain fatty acids via beta-oxidation cycle. Catalyzes the formation of 3-oxoacyl-CoA from enoyl-CoA via L-3-hydroxyacyl-CoA. It can also use D-3-hydroxyacyl-CoA and cis-3-enoyl-CoA as substrate. This chain is Fatty acid oxidation complex subunit alpha, found in Shewanella sediminis (strain HAW-EB3).